We begin with the raw amino-acid sequence, 203 residues long: UPF0637 protein SH1846 (203 aa).

The protein belongs to the UPF0637 family.

The chain is UPF0637 protein SH1846 from Staphylococcus haemolyticus (strain JCSC1435).